We begin with the raw amino-acid sequence, 600 residues long: Zinc metalloproteinase-disintegrin-like cobrin (600 aa).

The first 8 residues, 1-8 (MIQLSWSS), serve as a signal peptide directing secretion. A propeptide spanning residues 9–179 (IILESGNVND…DEPIKKTSLL (171 aa)) is cleaved from the precursor. The 196-residue stretch at 193–388 (KYIEFYMVVD…DRPQCILNKP (196 aa)) folds into the Peptidase M12B domain. Ca(2+) contacts are provided by Glu-196 and Asp-280. Disulfide bonds link Cys-304–Cys-383, Cys-344–Cys-367, and Cys-346–Cys-351. 3 residues coordinate Zn(2+): His-329, His-333, and His-339. Positions 383, 386, 398, 401, 403, 405, 408, and 411 each coordinate Ca(2+). A Disintegrin domain is found at 396–482 (PPICGNYFVE…ECPTDVFQRN (87 aa)). 14 disulfide bridges follow: Cys-399–Cys-428, Cys-410–Cys-423, Cys-412–Cys-418, Cys-422–Cys-445, Cys-436–Cys-442, Cys-441–Cys-467, Cys-454–Cys-474, Cys-461–Cys-492, Cys-486–Cys-497, Cys-504–Cys-554, Cys-519–Cys-562, Cys-532–Cys-542, Cys-549–Cys-588, and Cys-582–Cys-593. Asn-424 carries an N-linked (GlcNAc...) asparagine glycan. The D/ECD-tripeptide signature appears at 460–462 (DCD). Ca(2+) is bound by residues Asp-462, Leu-463, Glu-465, Asp-477, and Val-478.

Belongs to the venom metalloproteinase (M12B) family. P-III subfamily. P-IIIa sub-subfamily. In terms of assembly, monomer. Requires Zn(2+) as cofactor. As to expression, expressed by the venom gland.

The protein localises to the secreted. In terms of biological role, snake venom zinc metalloproteinase that may cleave complement protein C3 into C3c-like (C3o). The polypeptide is Zinc metalloproteinase-disintegrin-like cobrin (Naja kaouthia (Monocled cobra)).